A 200-amino-acid chain; its full sequence is Probable GTP-binding protein EngB (200 aa).

Positions 26 to 200 (SIPEVALAGR…IYEIAQCIKK (175 aa)) constitute an EngB-type G domain. Residues 34 to 41 (GRSNVGKS), 61 to 65 (GCTRQ), 80 to 83 (DLPG), 147 to 150 (TKID), and 179 to 181 (VSS) contribute to the GTP site. Residues serine 41 and threonine 63 each contribute to the Mg(2+) site.

The protein belongs to the TRAFAC class TrmE-Era-EngA-EngB-Septin-like GTPase superfamily. EngB GTPase family. Requires Mg(2+) as cofactor.

Its function is as follows. Necessary for normal cell division and for the maintenance of normal septation. The polypeptide is Probable GTP-binding protein EngB (Ehrlichia ruminantium (strain Gardel)).